Consider the following 327-residue polypeptide: Aspartate carbamoyltransferase catalytic subunit (327 aa).

Carbamoyl phosphate contacts are provided by arginine 54 and threonine 55. Lysine 82 is an L-aspartate binding site. Residues arginine 104, histidine 134, and glutamine 137 each contribute to the carbamoyl phosphate site. Positions 177 and 232 each coordinate L-aspartate. Carbamoyl phosphate is bound by residues glycine 280 and proline 281.

It belongs to the aspartate/ornithine carbamoyltransferase superfamily. ATCase family. In terms of assembly, heterododecamer (2C3:3R2) of six catalytic PyrB chains organized as two trimers (C3), and six regulatory PyrI chains organized as three dimers (R2).

It catalyses the reaction carbamoyl phosphate + L-aspartate = N-carbamoyl-L-aspartate + phosphate + H(+). Its pathway is pyrimidine metabolism; UMP biosynthesis via de novo pathway; (S)-dihydroorotate from bicarbonate: step 2/3. Its function is as follows. Catalyzes the condensation of carbamoyl phosphate and aspartate to form carbamoyl aspartate and inorganic phosphate, the committed step in the de novo pyrimidine nucleotide biosynthesis pathway. The chain is Aspartate carbamoyltransferase catalytic subunit from Micrococcus luteus (strain ATCC 4698 / DSM 20030 / JCM 1464 / CCM 169 / CCUG 5858 / IAM 1056 / NBRC 3333 / NCIMB 9278 / NCTC 2665 / VKM Ac-2230) (Micrococcus lysodeikticus).